The following is a 639-amino-acid chain: ADP-ribosylation factor-binding protein GGA1 (639 aa).

M1 bears the N-acetylmethionine mark. Residues 17-147 (ATNPLNKELD…MLKKQGIVKS (131 aa)) enclose the VHS domain. The interaction with ARF3 stretch occupies residues 114–274 (KILELLYSWT…RLASDTEDND (161 aa)). The region spanning 171–299 (DEEKSKMLAR…VINLYKQLVR (129 aa)) is the GAT domain. Phosphoserine is present on S185. The tract at residues 300–509 (GEEVNGDATA…ITVPLESIKP (210 aa)) is unstructured hinge. Disordered regions lie at residues 320–421 (LDLS…SGLD) and 434–492 (SLPP…QPVP). A Phosphoserine; by CK2 modification is found at S355. An Autoinhibitory motif is present at residues 358-362 (DDELM). Positions 381–390 (GWNSFQSSDA) are enriched in polar residues. Position 418 is a phosphoserine (S418). Positions 462 to 480 (SSSCSSPSSSATSLLHTVS) are enriched in low complexity. The segment covering 481–490 (PEPPRPPQQP) has biased composition (pro residues). Positions 510–631 (SNILPVTVYD…NEMGDVDQFP (122 aa)) constitute a GAE domain.

The protein belongs to the GGA protein family. In terms of assembly, monomer. Interacts with GGA2 and GGA3. Binds to clathrin and activated ARFs, including ARF1, ARF5 and ARF6. Interacts with RABEP1. Interacts with RABGEF1. Interacts with the type-I membrane proteins LRP3, M6PR/CD-MPR and IGF2R/CI-MPR. Interacts (via N-terminal VHS domain) with SORL1/sorLA and SORT1 (via C-terminal cytosolic domain). Interacts with EPN4. Interacts with CCDC91. Interacts with HEATR5B/p200a. Interacts with SYNRG/gamma-synergin. Interacts (via GAE doamin) with NECAP1 and NECAP2. Interacts (via GAE domain) with AFTPH/aftiphilin. Interacts with TSG101 and UBC. Interacts with RNF11. Interacts (via VHS domain) with BACE1 (via DXXLL motif); the interaction highly increases when BACE1 is phosphorylated at 'Ser-498'. Interacts with CNST. Interacts with ADRA2B. Interacts with ARL3; the interaction recruits, in collaboration with RABEP1, PKD1:PKD2 complex to trans-Golgi network and is required for ciliary targeting. In terms of processing, phosphorylated by CK2 and dephosphorylated by PP2A. Phosphorylation of GGA1 allows the internal DXXLL motif to bind the VHS domain and to inhibit the recognition of cargo signals. Ubiquitinated. In terms of tissue distribution, ubiquitously expressed.

It localises to the golgi apparatus. The protein resides in the trans-Golgi network membrane. Its subcellular location is the endosome membrane. It is found in the early endosome membrane. In terms of biological role, plays a role in protein sorting and trafficking between the trans-Golgi network (TGN) and endosomes. Mediates the ARF-dependent recruitment of clathrin to the TGN and binds ubiquitinated proteins and membrane cargo molecules with a cytosolic acidic cluster-dileucine (DXXLL) motif. Mediates export of the GPCR receptor ADRA2B to the cell surface. Required for targeting PKD1:PKD2 complex from the trans-Golgi network to the cilium membrane. Regulates retrograde transport of proteins such as phosphorylated form of BACE1 from endosomes to the trans-Golgi network. The sequence is that of ADP-ribosylation factor-binding protein GGA1 (GGA1) from Homo sapiens (Human).